The sequence spans 176 residues: Shikimate kinase (176 aa).

Residue glycine 14–threonine 19 coordinates ATP. Serine 18 is a Mg(2+) binding site. Positions 36, 60, and 83 each coordinate substrate. Arginine 121 is a binding site for ATP. Arginine 140 contacts substrate.

Belongs to the shikimate kinase family. As to quaternary structure, monomer. Requires Mg(2+) as cofactor.

The protein resides in the cytoplasm. The enzyme catalyses shikimate + ATP = 3-phosphoshikimate + ADP + H(+). It functions in the pathway metabolic intermediate biosynthesis; chorismate biosynthesis; chorismate from D-erythrose 4-phosphate and phosphoenolpyruvate: step 5/7. Functionally, catalyzes the specific phosphorylation of the 3-hydroxyl group of shikimic acid using ATP as a cosubstrate. The sequence is that of Shikimate kinase from Francisella philomiragia subsp. philomiragia (strain ATCC 25017 / CCUG 19701 / FSC 153 / O#319-036).